Consider the following 230-residue polypeptide: Urease accessory protein UreF (230 aa).

The protein belongs to the UreF family. In terms of assembly, ureD, UreF and UreG form a complex that acts as a GTP-hydrolysis-dependent molecular chaperone, activating the urease apoprotein by helping to assemble the nickel containing metallocenter of UreC. The UreE protein probably delivers the nickel.

The protein resides in the cytoplasm. Required for maturation of urease via the functional incorporation of the urease nickel metallocenter. The protein is Urease accessory protein UreF of Allorhizobium ampelinum (strain ATCC BAA-846 / DSM 112012 / S4) (Agrobacterium vitis (strain S4)).